The following is a 546-amino-acid chain: Probable malate:quinone oxidoreductase (546 aa).

Belongs to the MQO family. FAD is required as a cofactor.

The catalysed reaction is (S)-malate + a quinone = a quinol + oxaloacetate. It functions in the pathway carbohydrate metabolism; tricarboxylic acid cycle; oxaloacetate from (S)-malate (quinone route): step 1/1. The sequence is that of Probable malate:quinone oxidoreductase from Acinetobacter baumannii (strain ACICU).